Here is a 546-residue protein sequence, read N- to C-terminus: Probable protein kinase UbiB (546 aa).

One can recognise a Protein kinase domain in the interval 124–502 (DFEIKPLASA…HVRQGQSRYF (379 aa)). Residues 130–138 (LASASIAQV) and Lys-153 contribute to the ATP site. Asp-288 serves as the catalytic Proton acceptor. 2 helical membrane passes run 501 to 521 (YFLG…VSRP) and 522 to 542 (EWGL…FVGW).

This sequence belongs to the ABC1 family. UbiB subfamily.

The protein resides in the cell inner membrane. Its pathway is cofactor biosynthesis; ubiquinone biosynthesis [regulation]. In terms of biological role, is probably a protein kinase regulator of UbiI activity which is involved in aerobic coenzyme Q (ubiquinone) biosynthesis. In Escherichia coli O45:K1 (strain S88 / ExPEC), this protein is Probable protein kinase UbiB.